Here is a 139-residue protein sequence, read N- to C-terminus: uncharacterized protein (139 aa).

2 consecutive transmembrane segments (helical) span residues 35 to 55 (LVFL…SFLI) and 57 to 77 (FGIL…LTVI).

Its subcellular location is the membrane. This is an uncharacterized protein from Saccharomyces cerevisiae (strain ATCC 204508 / S288c) (Baker's yeast).